The following is a 433-amino-acid chain: Ligand-dependent corepressor (433 aa).

A disordered region spans residues 1–51 (MQRMIQQFAAEYTSKNSSTQDPSQPNSTKNQSLPKASPVTTSPTAATTQNP). Polar residues predominate over residues 13–34 (TSKNSSTQDPSQPNSTKNQSLP). Residues 36-48 (ASPVTTSPTAATT) show a composition bias toward low complexity. Phosphoserine is present on Ser-42. Residues 53–57 (LSKLL) carry the Interaction with nuclear receptors motif. Ser-63 is modified (phosphoserine). The disordered stretch occupies residues 64 to 147 (PLDLTVRKSQ…GTREGFGHST (84 aa)). A compositionally biased stretch (polar residues) spans 93-110 (AGSTSLSHSPGCSSTQGN). Ser-249 carries the post-translational modification Phosphoserine. Lys-254 is covalently cross-linked (Glycyl lysine isopeptide (Lys-Gly) (interchain with G-Cter in SUMO2)). A disordered region spans residues 299-348 (QSRKSMLDAGPDSWGSDAEQSTSGQPYPTSDQEGDPGSKQPRKKRGRYRQ). Over residues 316-329 (AEQSTSGQPYPTSD) the composition is skewed to polar residues. Residues 339–345 (PRKKRGR) carry the Nuclear localization signal motif. The HTH psq-type domain occupies 340-392 (RKKRGRYRQYNSEILEEAISVVMSGKMSVSKAQSIYGIPHSTLEYKVKERLGT). Residue Arg-345 forms a Glycyl lysine isopeptide (Lys-Gly) (interchain with G-Cter in SUMO2) linkage. The segment at residues 368–388 (VSKAQSIYGIPHSTLEYKVKE) is a DNA-binding region (H-T-H motif). Residue Gly-391 forms a Glycyl lysine isopeptide (Lys-Gly) (interchain with G-Cter in SUMO2) linkage. Positions 393–412 (LKNPPKKKMKLMRSEGPDVS) are disordered. Lys-414 is covalently cross-linked (Glycyl lysine isopeptide (Lys-Gly) (interchain with G-Cter in SUMO2)).

In terms of assembly, interacts with ESR1 and ESR2 in the presence of estradiol. Interacts with CTBP1, HDAC3 and HDAC6. Component of a large corepressor complex that contains about 20 proteins, including CTBP1, CTBP2, HDAC1 and HDAC2. In terms of tissue distribution, ubiquitous.

Its subcellular location is the nucleus. Functionally, may act as transcription activator that binds DNA elements with the sequence 5'-CCCTATCGATCGATCTCTACCT-3'. Repressor of ligand-dependent transcription activation by target nuclear receptors. Repressor of ligand-dependent transcription activation by ESR1, ESR2, NR3C1, PGR, RARA, RARB, RARG, RXRA and VDR. This Homo sapiens (Human) protein is Ligand-dependent corepressor.